A 298-amino-acid chain; its full sequence is N-acetylmuramic acid 6-phosphate etherase (298 aa).

An SIS domain is found at 55–218; sequence IHTQVSGGGR…STGLMIKSGK (164 aa). The active-site Proton donor is E83. E114 is an active-site residue.

It belongs to the GCKR-like family. MurNAc-6-P etherase subfamily. Homodimer.

It carries out the reaction N-acetyl-D-muramate 6-phosphate + H2O = N-acetyl-D-glucosamine 6-phosphate + (R)-lactate. It participates in amino-sugar metabolism; 1,6-anhydro-N-acetylmuramate degradation. Its pathway is amino-sugar metabolism; N-acetylmuramate degradation. The protein operates within cell wall biogenesis; peptidoglycan recycling. In terms of biological role, specifically catalyzes the cleavage of the D-lactyl ether substituent of MurNAc 6-phosphate, producing GlcNAc 6-phosphate and D-lactate. Together with AnmK, is also required for the utilization of anhydro-N-acetylmuramic acid (anhMurNAc) either imported from the medium or derived from its own cell wall murein, and thus plays a role in cell wall recycling. In Escherichia coli O6:K15:H31 (strain 536 / UPEC), this protein is N-acetylmuramic acid 6-phosphate etherase.